A 392-amino-acid polypeptide reads, in one-letter code: Queuine tRNA-ribosyltransferase (392 aa).

Catalysis depends on Asp-93, which acts as the Proton acceptor. Residues 93-97, Asp-147, Gln-189, and Gly-216 contribute to the substrate site; that span reads DSGGY. Residues 247-253 are RNA binding; the sequence is GVGAPED. Asp-266 functions as the Nucleophile in the catalytic mechanism. Positions 271 to 275 are RNA binding; important for wobble base 34 recognition; that stretch reads TRVAR. Cys-304, Cys-306, Cys-309, and His-335 together coordinate Zn(2+).

This sequence belongs to the queuine tRNA-ribosyltransferase family. In terms of assembly, homodimer. Within each dimer, one monomer is responsible for RNA recognition and catalysis, while the other monomer binds to the replacement base PreQ1. The cofactor is Zn(2+).

The catalysed reaction is 7-aminomethyl-7-carbaguanine + guanosine(34) in tRNA = 7-aminomethyl-7-carbaguanosine(34) in tRNA + guanine. It functions in the pathway tRNA modification; tRNA-queuosine biosynthesis. Functionally, catalyzes the base-exchange of a guanine (G) residue with the queuine precursor 7-aminomethyl-7-deazaguanine (PreQ1) at position 34 (anticodon wobble position) in tRNAs with GU(N) anticodons (tRNA-Asp, -Asn, -His and -Tyr). Catalysis occurs through a double-displacement mechanism. The nucleophile active site attacks the C1' of nucleotide 34 to detach the guanine base from the RNA, forming a covalent enzyme-RNA intermediate. The proton acceptor active site deprotonates the incoming PreQ1, allowing a nucleophilic attack on the C1' of the ribose to form the product. After dissociation, two additional enzymatic reactions on the tRNA convert PreQ1 to queuine (Q), resulting in the hypermodified nucleoside queuosine (7-(((4,5-cis-dihydroxy-2-cyclopenten-1-yl)amino)methyl)-7-deazaguanosine). The polypeptide is Queuine tRNA-ribosyltransferase (Dehalococcoides mccartyi (strain CBDB1)).